Reading from the N-terminus, the 67-residue chain is DNA-directed RNA polymerase subunit omega (67 aa).

This sequence belongs to the RNA polymerase subunit omega family. As to quaternary structure, the RNAP catalytic core consists of 2 alpha, 1 beta, 1 beta' and 1 omega subunit. When a sigma factor is associated with the core the holoenzyme is formed, which can initiate transcription.

It carries out the reaction RNA(n) + a ribonucleoside 5'-triphosphate = RNA(n+1) + diphosphate. Its function is as follows. Promotes RNA polymerase assembly. Latches the N- and C-terminal regions of the beta' subunit thereby facilitating its interaction with the beta and alpha subunits. The protein is DNA-directed RNA polymerase subunit omega of Polaromonas sp. (strain JS666 / ATCC BAA-500).